A 444-amino-acid chain; its full sequence is 3-phosphoshikimate 1-carboxyvinyltransferase (444 aa).

3-phosphoshikimate is bound by residues lysine 24, serine 25, and arginine 29. A phosphoenolpyruvate-binding site is contributed by lysine 24. Phosphoenolpyruvate-binding residues include glycine 97 and arginine 125. 4 residues coordinate 3-phosphoshikimate: serine 170, glutamine 172, aspartate 318, and lysine 345. Position 172 (glutamine 172) interacts with phosphoenolpyruvate. Aspartate 318 (proton acceptor) is an active-site residue. 2 residues coordinate phosphoenolpyruvate: arginine 349 and arginine 391.

It belongs to the EPSP synthase family. As to quaternary structure, monomer.

Its subcellular location is the cytoplasm. The catalysed reaction is 3-phosphoshikimate + phosphoenolpyruvate = 5-O-(1-carboxyvinyl)-3-phosphoshikimate + phosphate. Its pathway is metabolic intermediate biosynthesis; chorismate biosynthesis; chorismate from D-erythrose 4-phosphate and phosphoenolpyruvate: step 6/7. In terms of biological role, catalyzes the transfer of the enolpyruvyl moiety of phosphoenolpyruvate (PEP) to the 5-hydroxyl of shikimate-3-phosphate (S3P) to produce enolpyruvyl shikimate-3-phosphate and inorganic phosphate. This is 3-phosphoshikimate 1-carboxyvinyltransferase from Halorhodospira halophila (strain DSM 244 / SL1) (Ectothiorhodospira halophila (strain DSM 244 / SL1)).